The chain runs to 98 residues: Cell cycle protein GpsB (98 aa).

A coiled-coil region spans residues 34–71 (LDLIIKDYEAFQQEIDELRQENARLKRQVEELQKRPAM).

Belongs to the GpsB family. As to quaternary structure, forms polymers through the coiled coil domains. Interacts with PBP1, MreC and EzrA.

Its subcellular location is the cytoplasm. In terms of biological role, divisome component that associates with the complex late in its assembly, after the Z-ring is formed, and is dependent on DivIC and PBP2B for its recruitment to the divisome. Together with EzrA, is a key component of the system that regulates PBP1 localization during cell cycle progression. Its main role could be the removal of PBP1 from the cell pole after pole maturation is completed. Also contributes to the recruitment of PBP1 to the division complex. Not essential for septum formation. This is Cell cycle protein GpsB from Geobacillus kaustophilus (strain HTA426).